A 494-amino-acid polypeptide reads, in one-letter code: Probable malate:quinone oxidoreductase 3 (494 aa).

It belongs to the MQO family. Requires FAD as cofactor.

It carries out the reaction (S)-malate + a quinone = a quinol + oxaloacetate. It participates in carbohydrate metabolism; tricarboxylic acid cycle; oxaloacetate from (S)-malate (quinone route): step 1/1. The polypeptide is Probable malate:quinone oxidoreductase 3 (Staphylococcus epidermidis (strain ATCC 12228 / FDA PCI 1200)).